The chain runs to 498 residues: Fascin-3 (498 aa).

This sequence belongs to the fascin family. In terms of tissue distribution, expressed in testis.

The protein resides in the cytoplasm. It is found in the cytoskeleton. Acts as an actin bundling protein. This Homo sapiens (Human) protein is Fascin-3 (FSCN3).